The following is a 216-amino-acid chain: Protein Syd (216 aa).

Belongs to the Syd family.

The protein localises to the cell inner membrane. Its function is as follows. Interacts with the SecY protein in vivo. May bind preferentially to an uncomplexed state of SecY, thus functioning either as a chelating agent for excess SecY in the cell or as a regulatory factor that negatively controls the translocase function. This chain is Protein Syd, found in Shewanella frigidimarina (strain NCIMB 400).